The primary structure comprises 312 residues: Malate dehydrogenase (312 aa).

NAD(+) contacts are provided by residues 7–13 and D34; that span reads GAAGGIG. Substrate-binding residues include R81 and R87. Residues N94 and 117 to 119 each bind NAD(+); that span reads ITN. Substrate contacts are provided by N119 and R153. Catalysis depends on H177, which acts as the Proton acceptor. An NAD(+)-binding site is contributed by M228.

Belongs to the LDH/MDH superfamily. MDH type 1 family. Homodimer.

The enzyme catalyses (S)-malate + NAD(+) = oxaloacetate + NADH + H(+). Catalyzes the reversible oxidation of malate to oxaloacetate. The sequence is that of Malate dehydrogenase from Mannheimia succiniciproducens (strain KCTC 0769BP / MBEL55E).